A 339-amino-acid chain; its full sequence is Dihydroorotate dehydrogenase (quinone) (339 aa).

Residues 61–65 (AGLDK) and T85 each bind FMN. K65 is a binding site for substrate. 110–114 (NRMGF) contributes to the substrate binding site. FMN contacts are provided by N138 and N171. N171 lines the substrate pocket. The active-site Nucleophile is S174. N176 contributes to the substrate binding site. The FMN site is built by K216 and T244. Substrate is bound at residue 245–246 (NT). FMN contacts are provided by residues G267, G296, and 317 to 318 (YS).

The protein belongs to the dihydroorotate dehydrogenase family. Type 2 subfamily. In terms of assembly, monomer. FMN serves as cofactor.

The protein localises to the cell membrane. It carries out the reaction (S)-dihydroorotate + a quinone = orotate + a quinol. It functions in the pathway pyrimidine metabolism; UMP biosynthesis via de novo pathway; orotate from (S)-dihydroorotate (quinone route): step 1/1. Catalyzes the conversion of dihydroorotate to orotate with quinone as electron acceptor. This chain is Dihydroorotate dehydrogenase (quinone), found in Pseudomonas fluorescens (strain ATCC BAA-477 / NRRL B-23932 / Pf-5).